We begin with the raw amino-acid sequence, 157 residues long: Fimbrial protein Q (157 aa).

A propeptide spanning residues 1–6 is cleaved from the precursor; it reads MNAQKG. Phe7 carries the N-methylphenylalanine modification. The cysteines at positions 136 and 155 are disulfide-linked.

This sequence belongs to the N-Me-Phe pilin family. In terms of assembly, the pili are polar flexible filaments of about 5.4 nanometers diameter and 2.5 micrometers average length; they consist of only a single polypeptide chain arranged in a helical configuration of five subunits per turn in the assembled pilus.

The protein resides in the fimbrium. This chain is Fimbrial protein Q (tfpQ), found in Moraxella bovis.